We begin with the raw amino-acid sequence, 361 residues long: Porphobilinogen deaminase (361 aa).

Serine 2 carries the post-translational modification N-acetylserine. Serine 69 bears the Phosphoserine mark. Position 74 is an N6-acetyllysine (lysine 74). The residue at position 147 (serine 147) is a Phosphoserine. At cysteine 261 the chain carries S-(dipyrrolylmethanemethyl)cysteine.

This sequence belongs to the HMBS family. In terms of assembly, monomer. The cofactor is dipyrromethane.

Its subcellular location is the cytoplasm. It is found in the cytosol. The catalysed reaction is 4 porphobilinogen + H2O = hydroxymethylbilane + 4 NH4(+). It functions in the pathway porphyrin-containing compound metabolism; protoporphyrin-IX biosynthesis; coproporphyrinogen-III from 5-aminolevulinate: step 2/4. In terms of biological role, as part of the heme biosynthetic pathway, catalyzes the sequential polymerization of four molecules of porphobilinogen to form hydroxymethylbilane, also known as preuroporphyrinogen. Catalysis begins with the assembly of the dipyrromethane cofactor by the apoenzyme from two molecules of porphobilinogen or from preuroporphyrinogen. The covalently linked cofactor acts as a primer, around which the tetrapyrrole product is assembled. In the last step of catalysis, the product, preuroporphyrinogen, is released, leaving the cofactor bound to the holodeaminase intact. This Mus musculus (Mouse) protein is Porphobilinogen deaminase (Hmbs).